We begin with the raw amino-acid sequence, 300 residues long: N-acetylmuramic acid 6-phosphate etherase (300 aa).

An SIS domain is found at Ile-57–Lys-220. Glu-85 acts as the Proton donor in catalysis. Glu-116 is a catalytic residue.

Belongs to the GCKR-like family. MurNAc-6-P etherase subfamily. As to quaternary structure, homodimer.

It catalyses the reaction N-acetyl-D-muramate 6-phosphate + H2O = N-acetyl-D-glucosamine 6-phosphate + (R)-lactate. It functions in the pathway amino-sugar metabolism; 1,6-anhydro-N-acetylmuramate degradation. It participates in amino-sugar metabolism; N-acetylmuramate degradation. Its pathway is cell wall biogenesis; peptidoglycan recycling. Functionally, specifically catalyzes the cleavage of the D-lactyl ether substituent of MurNAc 6-phosphate, producing GlcNAc 6-phosphate and D-lactate. Together with AnmK, is also required for the utilization of anhydro-N-acetylmuramic acid (anhMurNAc) either imported from the medium or derived from its own cell wall murein, and thus plays a role in cell wall recycling. The polypeptide is N-acetylmuramic acid 6-phosphate etherase (Aliivibrio fischeri (strain MJ11) (Vibrio fischeri)).